Here is a 55-residue protein sequence, read N- to C-terminus: Small ribosomal subunit protein bS21 (55 aa).

It belongs to the bacterial ribosomal protein bS21 family.

This is Small ribosomal subunit protein bS21 from Ureaplasma parvum serovar 3 (strain ATCC 27815 / 27 / NCTC 11736).